Consider the following 374-residue polypeptide: Quinolinate synthase (374 aa).

Residues His-53 and Ser-70 each contribute to the iminosuccinate site. Residue Cys-116 coordinates [4Fe-4S] cluster. Iminosuccinate-binding positions include 148 to 150 (YMN) and Ser-169. Cys-236 lines the [4Fe-4S] cluster pocket. Residues 262–264 (HPE) and Thr-279 each bind iminosuccinate. [4Fe-4S] cluster is bound at residue Cys-327.

The protein belongs to the quinolinate synthase family. Type 3 subfamily. Requires [4Fe-4S] cluster as cofactor.

The protein resides in the cytoplasm. It carries out the reaction iminosuccinate + dihydroxyacetone phosphate = quinolinate + phosphate + 2 H2O + H(+). The protein operates within cofactor biosynthesis; NAD(+) biosynthesis; quinolinate from iminoaspartate: step 1/1. In terms of biological role, catalyzes the condensation of iminoaspartate with dihydroxyacetone phosphate to form quinolinate. The polypeptide is Quinolinate synthase (Halobacterium salinarum (strain ATCC 29341 / DSM 671 / R1)).